A 163-amino-acid polypeptide reads, in one-letter code: Phosphopantetheine adenylyltransferase (163 aa).

A substrate-binding site is contributed by T10. ATP is bound by residues 10 to 11 (TF) and H18. Substrate-binding residues include K42, L74, and R88. ATP contacts are provided by residues 89-91 (GLR), E99, and 124-130 (NSFISST).

It belongs to the bacterial CoaD family. As to quaternary structure, homohexamer. Mg(2+) is required as a cofactor.

The protein localises to the cytoplasm. The enzyme catalyses (R)-4'-phosphopantetheine + ATP + H(+) = 3'-dephospho-CoA + diphosphate. It participates in cofactor biosynthesis; coenzyme A biosynthesis; CoA from (R)-pantothenate: step 4/5. Its function is as follows. Reversibly transfers an adenylyl group from ATP to 4'-phosphopantetheine, yielding dephospho-CoA (dPCoA) and pyrophosphate. This chain is Phosphopantetheine adenylyltransferase, found in Shewanella baltica (strain OS155 / ATCC BAA-1091).